The sequence spans 400 residues: LIM/homeobox protein Lhx3 (400 aa).

LIM zinc-binding domains lie at 34-84 (CAGC…CKDD) and 93-147 (CAAC…CKAD). Ser74 is subject to Phosphoserine. The homeobox DNA-binding region spans 160-219 (AKRPRTTITAKQLETLKSAYNTSPKPARHVREQLSSETGLDMRVVQVWFQNRRAKEKRLK). 2 disordered regions span residues 215–280 (EKRL…SSLG) and 297–400 (TLDH…HAQF). A Phosphotyrosine modification is found at Tyr230. 2 positions are modified to phosphoserine: Ser237 and Ser241. Pro residues-rich tracts occupy residues 319 to 334 (GIPP…PGPQ) and 352 to 361 (SGPPGGPPPM). The span at 368–380 (GPSSDLSTESSSG) shows a compositional bias: polar residues.

In terms of assembly, interacts with POU1F1. At neuronal promoters, interacts with LDB1, in motor neurons LDB1 is displaced by ISL1 and a ternary complex is formed in which ISL1 contacts both LHX3 and LDB1; allosteric structural changes in the DNA binding domain of LHX3, induced by the ISL1-LHX3 interaction, may explain differences in sequence specificity of the different complexes. Interacts with LDB2. May interact with CITED2/MRG1. Mostly expressed in the pituitary anterior and intermediate lobes. It is also expressed in the pineal gland and transiently in the primordia of motor neurons including the spinal cord, pons and medulla oblongata.

Its subcellular location is the nucleus. In terms of biological role, transcription factor. Recognizes and binds to the consensus sequence motif 5'-AATTAATTA-3' in the regulatory elements of target genes, such as glycoprotein hormones alpha chain CGA and visual system homeobox CHX10, positively modulating transcription; transcription can be co-activated by LDB2. Synergistically enhances transcription from the prolactin promoter in cooperation with POU1F1/Pit-1. Required for the establishment of the specialized cells of the pituitary gland and the nervous system. Involved in the development of interneurons and motor neurons in cooperation with LDB1 and ISL1. This is LIM/homeobox protein Lhx3 (Lhx3) from Mus musculus (Mouse).